The chain runs to 509 residues: Dihydrolipoyl dehydrogenase, mitochondrial (509 aa).

The N-terminal 35 residues, 1 to 35 (MQSWSRVYCSLVKRGHFSRISHGLQGVSVVPLRTY), are a transit peptide targeting the mitochondrion. K66 carries the post-translational modification N6-acetyllysine; alternate. At K66 the chain carries N6-succinyllysine; alternate. FAD contacts are provided by residues 71–80 (EKNETLGGTC) and K89. C80 and C85 form a disulfide bridge. N6-acetyllysine; alternate is present on residues K104, K122, K132, and K143. K104, K122, K132, and K143 each carry N6-succinyllysine; alternate. An FAD-binding site is contributed by G154. N6-succinyllysine is present on residues K159 and K166. Residue 183–185 (TGS) coordinates FAD. Residues 220-227 (GAGVIGVE) and E243 each bind NAD(+). 2 positions are modified to N6-succinyllysine: K273 and K277. NAD(+) is bound at residue V278. Residues S285 and S297 each carry the phosphoserine modification. G314 lines the NAD(+) pocket. At K346 the chain carries N6-acetyllysine. Residues D355 and 361-364 (MLAH) contribute to the FAD site. N6-acetyllysine; alternate is present on K410. K410 bears the N6-succinyllysine; alternate mark. An N6-acetyllysine mark is found at K417 and K420. K430 is modified (N6-succinyllysine). H487 (proton acceptor) is an active-site residue. N6-acetyllysine; alternate is present on K505. At K505 the chain carries N6-succinyllysine; alternate.

This sequence belongs to the class-I pyridine nucleotide-disulfide oxidoreductase family. Homodimer. Part of the multimeric pyruvate dehydrogenase complex that contains multiple copies of pyruvate dehydrogenase (subunits PDHA (PDHA1 or PDHA2) and PDHB, E1), dihydrolipoamide acetyltransferase (DLAT, E2) and lipoamide dehydrogenase (DLD, E3). These subunits are bound to an inner core composed of about 48 DLAT and 12 PDHX molecules (by non covalent bonds). The 2-oxoglutarate dehydrogenase complex is composed of OGDH (2-oxoglutarate dehydrogenase; E1), DLST (dihydrolipoamide succinyltransferase; E2), DLD (dihydrolipoamide dehydrogenase; E3) and the assembly factor KGD4. It contains multiple copies of the three enzymatic components (E1, E2 and E3). In the nucleus, the 2-oxoglutarate dehydrogenase complex associates with KAT2A. Interacts with PDHX. FAD serves as cofactor. Post-translationally, tyrosine phosphorylated.

The protein resides in the mitochondrion matrix. The protein localises to the nucleus. Its subcellular location is the cell projection. It localises to the cilium. It is found in the flagellum. The protein resides in the cytoplasmic vesicle. The protein localises to the secretory vesicle. Its subcellular location is the acrosome. It catalyses the reaction N(6)-[(R)-dihydrolipoyl]-L-lysyl-[protein] + NAD(+) = N(6)-[(R)-lipoyl]-L-lysyl-[protein] + NADH + H(+). Lipoamide dehydrogenase is a component of the glycine cleavage system as well as an E3 component of three alpha-ketoacid dehydrogenase complexes (pyruvate-, alpha-ketoglutarate-, and branched-chain amino acid-dehydrogenase complex). The 2-oxoglutarate dehydrogenase complex is mainly active in the mitochondrion. A fraction of the 2-oxoglutarate dehydrogenase complex also localizes in the nucleus and is required for lysine succinylation of histones: associates with KAT2A on chromatin and provides succinyl-CoA to histone succinyltransferase KAT2A. In monomeric form may have additional moonlighting function as serine protease. Involved in the hyperactivation of spermatazoa during capacitation and in the spermatazoal acrosome reaction. The protein is Dihydrolipoyl dehydrogenase, mitochondrial (DLD) of Bos taurus (Bovine).